The primary structure comprises 60 residues: Probable tautomerase SAG1079 (60 aa).

Catalysis depends on proline 2, which acts as the Proton acceptor; via imino nitrogen.

This sequence belongs to the 4-oxalocrotonate tautomerase family.

In Streptococcus agalactiae serotype V (strain ATCC BAA-611 / 2603 V/R), this protein is Probable tautomerase SAG1079.